We begin with the raw amino-acid sequence, 144 residues long: uncharacterized protein (144 aa).

The signal sequence occupies residues 1–22 (MCTDVAFFSLDCLATWLGGVCS).

This is an uncharacterized protein from Saccharomyces cerevisiae (strain ATCC 204508 / S288c) (Baker's yeast).